The primary structure comprises 187 residues: DNA-directed RNA polymerase subunit Rpo7 (187 aa).

Positions 82–166 constitute an S1 motif domain; sequence YELIEGEVVD…RGSKIALTMR (85 aa).

The protein belongs to the eukaryotic RPB7/RPC8 RNA polymerase subunit family. In terms of assembly, part of the RNA polymerase complex. Forms a stalk with Rpo4 that extends from the main structure.

It is found in the cytoplasm. The catalysed reaction is RNA(n) + a ribonucleoside 5'-triphosphate = RNA(n+1) + diphosphate. Functionally, DNA-dependent RNA polymerase (RNAP) catalyzes the transcription of DNA into RNA using the four ribonucleoside triphosphates as substrates. This Methanocaldococcus jannaschii (strain ATCC 43067 / DSM 2661 / JAL-1 / JCM 10045 / NBRC 100440) (Methanococcus jannaschii) protein is DNA-directed RNA polymerase subunit Rpo7.